We begin with the raw amino-acid sequence, 431 residues long: Tryptophan--tRNA ligase (431 aa).

ATP-binding positions include 12–14 and 20–21; these read TPS and GN. A 'HIGH' region motif is present at residues 13 to 21; sequence PSGTPHLGN. Asp145 lines the L-tryptophan pocket. ATP-binding positions include 157 to 159, Leu197, and 204 to 208; these read GRD and KMSKS. Residues 204-208 carry the 'KMSKS' region motif; the sequence is KMSKS.

The protein belongs to the class-I aminoacyl-tRNA synthetase family. Homodimer.

It is found in the cytoplasm. The enzyme catalyses tRNA(Trp) + L-tryptophan + ATP = L-tryptophyl-tRNA(Trp) + AMP + diphosphate + H(+). In terms of biological role, catalyzes the attachment of tryptophan to tRNA(Trp). This chain is Tryptophan--tRNA ligase, found in Xanthomonas campestris pv. campestris (strain ATCC 33913 / DSM 3586 / NCPPB 528 / LMG 568 / P 25).